A 174-amino-acid polypeptide reads, in one-letter code: MKKSVKQEQVTQMHDKLLRAKAVFLADFRGMNVDKATTLRNELRSASVEYKVFKNTLFDIAAKETEAACLAPYLAGPTAVAISYDDPVGAAKVLSKFAKDSKGVFVLKAGVLSGKVIDVNQIQALADLPSREVLIAKMLGSMQAPATNFVGVLAALPGSLVRALDAIRAKKEGN.

The protein belongs to the universal ribosomal protein uL10 family. In terms of assembly, part of the ribosomal stalk of the 50S ribosomal subunit. The N-terminus interacts with L11 and the large rRNA to form the base of the stalk. The C-terminus forms an elongated spine to which L12 dimers bind in a sequential fashion forming a multimeric L10(L12)X complex.

Its function is as follows. Forms part of the ribosomal stalk, playing a central role in the interaction of the ribosome with GTP-bound translation factors. The polypeptide is Large ribosomal subunit protein uL10 (Trichlorobacter lovleyi (strain ATCC BAA-1151 / DSM 17278 / SZ) (Geobacter lovleyi)).